A 2067-amino-acid polypeptide reads, in one-letter code: Dedicator of cytokinesis protein 11 (2067 aa).

In terms of domain architecture, PH spans 162 to 269 (GVMKQGWLQK…WVNTIKQALL (108 aa)). A disordered region spans residues 274 to 302 (DRRNGSETSEGSLDDDSSSQGKPESITES). Residues 291–302 (SSQGKPESITES) are compositionally biased toward polar residues. The region spanning 643-820 (NNHLYIYPQQ…PLFKVRAYVA (178 aa)) is the C2 DOCK-type domain. The segment at 1224-1267 (SSTIVDKEPSGSVTQNGLSRRGESRGSMYGDPGTPDINELHRRG) is disordered. The 427-residue stretch at 1614 to 2040 (RSYASTPELR…LSEIIHEQIF (427 aa)) folds into the DOCKER domain.

Belongs to the DOCK family.

Functionally, guanine nucleotide-exchange factor (GEF) that activates CDC42 by exchanging bound GDP for free GTP. This chain is Dedicator of cytokinesis protein 11, found in Danio rerio (Zebrafish).